Here is a 151-residue protein sequence, read N- to C-terminus: Ribosome maturation factor RimP (151 aa).

Belongs to the RimP family.

It is found in the cytoplasm. Its function is as follows. Required for maturation of 30S ribosomal subunits. The sequence is that of Ribosome maturation factor RimP from Shewanella amazonensis (strain ATCC BAA-1098 / SB2B).